The following is a 345-amino-acid chain: Phosphoribosylformylglycinamidine cyclo-ligase (345 aa).

It belongs to the AIR synthase family.

The protein resides in the cytoplasm. It catalyses the reaction 2-formamido-N(1)-(5-O-phospho-beta-D-ribosyl)acetamidine + ATP = 5-amino-1-(5-phospho-beta-D-ribosyl)imidazole + ADP + phosphate + H(+). It functions in the pathway purine metabolism; IMP biosynthesis via de novo pathway; 5-amino-1-(5-phospho-D-ribosyl)imidazole from N(2)-formyl-N(1)-(5-phospho-D-ribosyl)glycinamide: step 2/2. The polypeptide is Phosphoribosylformylglycinamidine cyclo-ligase (Myxococcus xanthus (strain DK1622)).